The chain runs to 395 residues: Elongation factor Tu (395 aa).

The 195-residue stretch at 10 to 204 (KSHVNIGTIG…AVDEYIPTPE (195 aa)) folds into the tr-type G domain. Positions 19-26 (GHVDHGKT) are G1. 19-26 (GHVDHGKT) provides a ligand contact to GTP. Position 26 (T26) interacts with Mg(2+). The interval 60 to 64 (GITIN) is G2. The interval 81-84 (DCPG) is G3. GTP contacts are provided by residues 81–85 (DCPGH) and 136–139 (NKMD). The interval 136–139 (NKMD) is G4. The segment at 174-176 (SAL) is G5.

Belongs to the TRAFAC class translation factor GTPase superfamily. Classic translation factor GTPase family. EF-Tu/EF-1A subfamily. Monomer.

It localises to the cytoplasm. It catalyses the reaction GTP + H2O = GDP + phosphate + H(+). Its function is as follows. GTP hydrolase that promotes the GTP-dependent binding of aminoacyl-tRNA to the A-site of ribosomes during protein biosynthesis. In Enterococcus faecalis (strain ATCC 700802 / V583), this protein is Elongation factor Tu.